Here is a 178-residue protein sequence, read N- to C-terminus: uncharacterized protein (178 aa).

It to E.coli YrdD.

This is an uncharacterized protein from Haemophilus influenzae (strain ATCC 51907 / DSM 11121 / KW20 / Rd).